The following is a 444-amino-acid chain: uncharacterized protein (444 aa).

The span at 1–11 shows a compositional bias: basic and acidic residues; it reads MASSAGRDKLR. A disordered region spans residues 1-35; sequence MASSAGRDKLRSRGQRVFAFGSSTPRDLSHMSKVP.

This is an uncharacterized protein from Caenorhabditis elegans.